The chain runs to 728 residues: Phosphoribosylformylglycinamidine synthase subunit PurL (728 aa).

Residue histidine 42 is part of the active site. Residues tyrosine 45 and lysine 84 each contribute to the ATP site. Residue glutamate 86 participates in Mg(2+) binding. Substrate is bound by residues 87 to 90 (SHNH) and arginine 109. Histidine 88 serves as the catalytic Proton acceptor. Residue aspartate 110 participates in Mg(2+) binding. Position 237 (glutamine 237) interacts with substrate. Aspartate 265 lines the Mg(2+) pocket. 309 to 311 (ESQ) is a binding site for substrate. Positions 491 and 528 each coordinate ATP. Position 529 (asparagine 529) interacts with Mg(2+). Serine 531 lines the substrate pocket.

This sequence belongs to the FGAMS family. In terms of assembly, monomer. Part of the FGAM synthase complex composed of 1 PurL, 1 PurQ and 2 PurS subunits.

The protein resides in the cytoplasm. The enzyme catalyses N(2)-formyl-N(1)-(5-phospho-beta-D-ribosyl)glycinamide + L-glutamine + ATP + H2O = 2-formamido-N(1)-(5-O-phospho-beta-D-ribosyl)acetamidine + L-glutamate + ADP + phosphate + H(+). It participates in purine metabolism; IMP biosynthesis via de novo pathway; 5-amino-1-(5-phospho-D-ribosyl)imidazole from N(2)-formyl-N(1)-(5-phospho-D-ribosyl)glycinamide: step 1/2. Functionally, part of the phosphoribosylformylglycinamidine synthase complex involved in the purines biosynthetic pathway. Catalyzes the ATP-dependent conversion of formylglycinamide ribonucleotide (FGAR) and glutamine to yield formylglycinamidine ribonucleotide (FGAM) and glutamate. The FGAM synthase complex is composed of three subunits. PurQ produces an ammonia molecule by converting glutamine to glutamate. PurL transfers the ammonia molecule to FGAR to form FGAM in an ATP-dependent manner. PurS interacts with PurQ and PurL and is thought to assist in the transfer of the ammonia molecule from PurQ to PurL. The polypeptide is Phosphoribosylformylglycinamidine synthase subunit PurL (Campylobacter jejuni subsp. doylei (strain ATCC BAA-1458 / RM4099 / 269.97)).